Here is a 256-residue protein sequence, read N- to C-terminus: Protein Ta0487 (256 aa).

It belongs to the CinA family.

This is Protein Ta0487 from Thermoplasma acidophilum (strain ATCC 25905 / DSM 1728 / JCM 9062 / NBRC 15155 / AMRC-C165).